A 263-amino-acid chain; its full sequence is UPF0758 protein NGR_c13970 (263 aa).

The region spanning 141 to 263 (VLSSWSAVID…HVSMKGLRLF (123 aa)) is the MPN domain. Zn(2+)-binding residues include histidine 212, histidine 214, and aspartate 225. A JAMM motif motif is present at residues 212–225 (HNHPSGDPTPSRAD).

The protein belongs to the UPF0758 family.

In Sinorhizobium fredii (strain NBRC 101917 / NGR234), this protein is UPF0758 protein NGR_c13970.